The primary structure comprises 428 residues: Histidine--tRNA ligase (428 aa).

This sequence belongs to the class-II aminoacyl-tRNA synthetase family. As to quaternary structure, homodimer.

The protein resides in the cytoplasm. It catalyses the reaction tRNA(His) + L-histidine + ATP = L-histidyl-tRNA(His) + AMP + diphosphate + H(+). The protein is Histidine--tRNA ligase of Pseudomonas entomophila (strain L48).